Consider the following 1052-residue polypeptide: Membrane-bound transcription factor site-1 protease (1052 aa).

The N-terminal stretch at 1–17 is a signal peptide; the sequence is MKLVNIWLLLLVVLLCG. Residues 18 to 186 constitute a propeptide that is removed on maturation; the sequence is KKHLGDRLEK…TGRHSSRRLL (169 aa). Serine 168 bears the Phosphoserine; by FAM20C mark. At 187-998 the chain is on the lumenal side; it reads RAIPRQVAQT…IMPGRYNQEV (812 aa). The 283-residue stretch at 190 to 472 folds into the Peptidase S8 domain; that stretch reads PRQVAQTLQA…HGKLDLLRAY (283 aa). Aspartate 218 functions as the Charge relay system in the catalytic mechanism. The N-linked (GlcNAc...) asparagine glycan is linked to asparagine 236. Histidine 249 serves as the catalytic Charge relay system. The N-linked (GlcNAc...) asparagine glycan is linked to asparagine 305. The active-site Charge relay system is the serine 414. Residues asparagine 515 and asparagine 728 are each glycosylated (N-linked (GlcNAc...) asparagine). Residues 877–887 show a composition bias toward polar residues; sequence PSLSHSGNRQR. Residues 877–899 are disordered; sequence PSLSHSGNRQRPPSGAGSVTPER. N-linked (GlcNAc...) asparagine glycosylation occurs at asparagine 939. The chain crosses the membrane as a helical span at residues 999 to 1021; sequence GQTIPVFAFLGAMVVLAFFVVQI. At 1022–1052 the chain is on the cytoplasmic side; the sequence is NKAKSRPKRRKPRVKRPQLMQQVHPPKTPSV. Residues 1027-1037 show a composition bias toward basic residues; the sequence is RPKRRKPRVKR. Positions 1027 to 1052 are disordered; the sequence is RPKRRKPRVKRPQLMQQVHPPKTPSV.

It belongs to the peptidase S8 family. As to quaternary structure, interacts with LYSET; this interaction bridges GNPTAB to MBTPS1. It depends on Ca(2+) as a cofactor. The 148 kDa zymogen is processed progressively into two membrane-bound 120 and 106 kDa forms in the endoplasmic reticulum, and late into a secreted 98 kDa form. The propeptide is autocatalytically removed through an intramolecular cleavage after Leu-186. Further cleavage generates 14, 10, and 8 kDa intermediates. As to expression, widely expressed.

The protein localises to the endoplasmic reticulum membrane. It is found in the golgi apparatus membrane. It carries out the reaction Processes precursors containing basic and hydrophobic/aliphatic residues at P4 and P2, respectively, with a relatively relaxed acceptance of amino acids at P1 and P3.. With respect to regulation, inhibited by divalent copper and zinc ions, but not by nickel or cobalt. Inhibited by its prosegment, but not smaller fragments. Inhibited by 4-(2-aminoethyl)benzenesulfonyl fluoride (AEBSF), a serine protease inhibitor. In terms of biological role, serine protease that cleaves after hydrophobic or small residues, provided that Arg or Lys is in position P4: known substrates include SREBF1/SREBP1, SREBF2/SREBP2, BDNF, GNPTAB, ATF6, ATF6B and FAM20C. Cleaves substrates after Arg-Ser-Val-Leu (SREBP2), Arg-His-Leu-Leu (ATF6), Arg-Gly-Leu-Thr (BDNF) and its own propeptide after Arg-Arg-Leu-Leu. Catalyzes the first step in the proteolytic activation of the sterol regulatory element-binding proteins (SREBPs) SREBF1/SREBP1 and SREBF2/SREBP2. Also mediates the first step in the proteolytic activation of the cyclic AMP-dependent transcription factor ATF-6 (ATF6 and ATF6B). Mediates the protein cleavage of GNPTAB into subunit alpha and beta, thereby participating in biogenesis of lysosomes. Cleaves the propeptide from FAM20C which is required for FAM20C secretion from the Golgi apparatus membrane and for enhancement of FAM20C kinase activity, promoting osteoblast differentiation and biomineralization. Involved in the regulation of M6P-dependent Golgi-to-lysosome trafficking of lysosomal enzymes. It is required for the activation of CREB3L2/BBF2H7, a transcriptional activator of MIA3/TANGO and other genes controlling mega vesicle formation. Therefore, it plays a key role in the regulation of mega vesicle-mediated collagen trafficking. In astrocytes and osteoblasts, upon DNA damage and ER stress, mediates the first step of the regulated intramembrane proteolytic activation of the transcription factor CREB3L1, leading to the inhibition of cell-cycle progression. The protein is Membrane-bound transcription factor site-1 protease of Homo sapiens (Human).